Consider the following 72-residue polypeptide: Small ribosomal subunit protein bS18 (72 aa).

Belongs to the bacterial ribosomal protein bS18 family. In terms of assembly, part of the 30S ribosomal subunit. Forms a tight heterodimer with protein bS6.

Binds as a heterodimer with protein bS6 to the central domain of the 16S rRNA, where it helps stabilize the platform of the 30S subunit. In Trichodesmium erythraeum (strain IMS101), this protein is Small ribosomal subunit protein bS18.